A 226-amino-acid polypeptide reads, in one-letter code: MAFPSVTSVTVENVTFPPTVKPPCSPNTFFLAGAGVRGLQIHHAFVKFTAICVYLQYDALSFLSVKWKTKSTHQLTESDQFFSDIVTGPFEKFMQVTMIKPLTGQQYSEKVAENCVAIWRSLGIYTDSEAEAIDKFLSVFKDLTFPPGSSILFTVSPNGSLTISFSGDETIPEVTSAVIENKLLSEAVLESMIGKNGVSPAAKQSLASRLSHLFKEPGVCDPQSHK.

Residues Thr49, Asn114, and Ser191 each contribute to the substrate site.

This sequence belongs to the chalcone isomerase family.

The enzyme catalyses a chalcone = a flavanone.. It functions in the pathway secondary metabolite biosynthesis; flavonoid biosynthesis. Catalyzes the intramolecular cyclization of bicyclic chalcones into tricyclic (S)-flavanones. Responsible for the isomerization of 4,2',4',6'-tetrahydroxychalcone (also termed chalcone) into naringenin. The polypeptide is Chalcone--flavanone isomerase 3 (CHI3) (Glycine max (Soybean)).